The primary structure comprises 1098 residues: Early transcription factor large subunit homolog (1098 aa).

In terms of domain architecture, Helicase ATP-binding spans 17-317; that stretch reads KGGRAFFPCD…PNGQPLQRQQ (301 aa). 64-71 is an ATP binding site; that stretch reads WQTGTGKS. The DEAH box motif lies at 246-249; the sequence is DEIH. The 201-residue stretch at 489–689 folds into the Helicase C-terminal domain; it reads MMKDILSIIR…EGDKALRKHA (201 aa).

Belongs to the DEAD box helicase family. DEAH subfamily.

The protein localises to the virion. The enzyme catalyses ATP + H2O = ADP + phosphate + H(+). Putative initation factor. The sequence is that of Early transcription factor large subunit homolog from African swine fever virus (isolate Tick/Malawi/Lil 20-1/1983) (ASFV).